The primary structure comprises 233 residues: MKYEDINENTIKITLSFDDLTDYDIKLSDFFGNQEVIEQFFYELVDELGLENRFGNVGMLTFQIQPFPQGVHMIVHEEAMLGEGGEIPDDPEEFEELMTGFYNKLNEIGADMARERGITDFKPGLGLPGTKKDEAEQEPDFIYYSIRYEDIMSVLTGIKNVKFADEESEFYRYDGNFYLVVLDNQKEKGKMHVESTRSRMMEYGEATKMSREFLQEYGECLIATRALDVLRKI.

The protein belongs to the MecA family. As to quaternary structure, homodimer.

Its function is as follows. Enables the recognition and targeting of unfolded and aggregated proteins to the ClpC protease or to other proteins involved in proteolysis. The sequence is that of Adapter protein MecA from Lactococcus lactis subsp. lactis (strain IL1403) (Streptococcus lactis).